A 220-amino-acid polypeptide reads, in one-letter code: Putative GED domain-containing protein DNM1P46 (220 aa).

The disordered stretch occupies residues 18-46; it reads VSVETRNVKPQGKDSKAEENGSHSFMHSM. The segment covering 28 to 38 has biased composition (basic and acidic residues); sequence QGKDSKAEENG. One can recognise a GED domain in the interval 54 to 149; sequence METTQNLVDS…CCPTCTRLGT (96 aa). The segment at 173–194 is disordered; it reads DTPGGVGRAGTAARRDSRGNEK. Over residues 185–194 the composition is skewed to basic and acidic residues; it reads ARRDSRGNEK.

In Homo sapiens (Human), this protein is Putative GED domain-containing protein DNM1P46 (DNM1P46).